Consider the following 933-residue polypeptide: Melanoma-associated antigen E1 (933 aa).

Disordered regions lie at residues 1 to 113 (MSLV…VSAG), 149 to 236 (GASI…GINL), 256 to 282 (SDISVPPPSAEGLSTSMPPPSGEVQST), and 360 to 393 (TSGLHDLEEESSISQMPLAAEGPSASGSSIEDEN). Basic residues predominate over residues 8–23 (SRRRRGGRANGRKNSG). 4 stretches are compositionally biased toward polar residues: residues 64-97 (GGSSTSVPPTASEGSSAPGQLITSEGRNTSQLPT), 149-166 (GASISEQPQSHEGPNVQP), 173-184 (GTSVPPTFSEES), and 219-236 (APSTSVPPTASNGLGINL). MAGE domains are found at residues 467–666 (MEQN…YNEA) and 721–912 (LESK…YREA). Residues 719–933 (SRLESKSRKL…RRPLVVRNLR (215 aa)) are interaction with DTNA.

Interacts with DTNA. Interacts with TRIM28.

Its subcellular location is the cytoplasm. It is found in the perinuclear region. The protein localises to the nucleus. The protein resides in the cell membrane. Its function is as follows. May enhance ubiquitin ligase activity of RING-type zinc finger-containing E3 ubiquitin-protein ligases. Proposed to act through recruitment and/or stabilization of the Ubl-conjugating enzyme (E2) at the E3:substrate complex. The sequence is that of Melanoma-associated antigen E1 (Magee1) from Rattus norvegicus (Rat).